Consider the following 229-residue polypeptide: Large ribosomal subunit protein uL1 (229 aa).

This sequence belongs to the universal ribosomal protein uL1 family. In terms of assembly, part of the 50S ribosomal subunit.

Functionally, binds directly to 23S rRNA. The L1 stalk is quite mobile in the ribosome, and is involved in E site tRNA release. Its function is as follows. Protein L1 is also a translational repressor protein, it controls the translation of the L11 operon by binding to its mRNA. In Listeria innocua serovar 6a (strain ATCC BAA-680 / CLIP 11262), this protein is Large ribosomal subunit protein uL1.